A 161-amino-acid chain; its full sequence is Terminase, small subunit (161 aa).

A helix-turn-helix (HTH) region spans residues 37 to 60 (KAEPFWHDNIRSKALDSWTPADLL). A coiled-coil region spans residues 88-115 (EERDEGLIKDLRKQIVELQRTILAQRRD). DNA is bound by residues K96, K100, R107, R114, and R128.

The protein belongs to the Hendrixvirinae small terminase family. Homononamer; forms a ring-like structure through which genomic DNA is translocated into the capsid. Interacts with the terminase small subunit; the active complex is composed of a pentamer ring of terminase large subunits and a nonamer ring of terminase small subunits. Binds a specific sequence on the viral genome. DNA transits through the central tunnel formed by the small subunit and sequence-specific recognition for packaging initiation and termination takes place as it emerges.

Functionally, the terminase small subunit binds to the packaging initiation site and regulates the ATPase activity of the terminase large subunit. The terminase lies at a unique vertex of the procapsid and is composed of two subunits, a small terminase subunit involved in viral DNA recognition (packaging sequence), and a large terminase subunit possessing endonucleolytic and ATPase activities. Both terminase subunits heterooligomerize and are docked on the portal protein to form the packaging machine. Packaging initiates by TerS recognizing the packaging sequence in the viral DNA. The nuclease activity of TerL cuts the viral DNA and the terminase-DNA complex binds to the portal of a procapsid shell. DNA is translocated into the capsid, powered by the packaging ATPase in TerL, which continues until the next site is encountered at which point the motor stops and again cuts the DNA to release the nucleocapsid filled with a unit-length genome ('unit length' packaging). The sequence is that of Terminase, small subunit (1) from Escherichia coli (Bacteriophage HK97).